A 302-amino-acid chain; its full sequence is Cuticle collagen dpy-13 (302 aa).

Triple-helical region stretches follow at residues 106 to 135 (GPQGAPGAPGKPGRPGKPGAPGFPGNPGKA), 154 to 210 (GPPG…EGLP), and 219 to 278 (GEPG…PGTP). A disordered region spans residues 108–284 (QGAPGAPGKP…PGTPGERGIC (177 aa)). Over residues 144 to 159 (TPPPCKPCPQGPPGAP) the composition is skewed to pro residues. A compositionally biased stretch (low complexity) spans 188 to 197 (PKGPNGAPGK). Pro residues-rich tracts occupy residues 247–257 (QPGPKGPPGPD) and 268–277 (QPGPVGPPGT).

It belongs to the cuticular collagen family. Collagen polypeptide chains are complexed within the cuticle by disulfide bonds and other types of covalent cross-links.

Its function is as follows. Nematode cuticles are composed largely of collagen-like proteins. The cuticle functions both as an exoskeleton and as a barrier to protect the worm from its environment. Mutations in dpy-13 affects the body shape. The polypeptide is Cuticle collagen dpy-13 (dpy-13) (Caenorhabditis elegans).